Consider the following 208-residue polypeptide: Small ribosomal subunit protein uS4 (208 aa).

The S4 RNA-binding domain maps to 98-159 (RRLDNVVYRL…KSRKIVSIND (62 aa)).

It belongs to the universal ribosomal protein uS4 family. In terms of assembly, part of the 30S ribosomal subunit. Contacts protein S5. The interaction surface between S4 and S5 is involved in control of translational fidelity.

Its function is as follows. One of the primary rRNA binding proteins, it binds directly to 16S rRNA where it nucleates assembly of the body of the 30S subunit. With S5 and S12 plays an important role in translational accuracy. The polypeptide is Small ribosomal subunit protein uS4 (Pelobacter propionicus (strain DSM 2379 / NBRC 103807 / OttBd1)).